The sequence spans 138 residues: Large ribosomal subunit protein uL16 (138 aa).

Residues M1–G19 are compositionally biased toward basic residues. The tract at residues M1–A21 is disordered.

It belongs to the universal ribosomal protein uL16 family. As to quaternary structure, part of the 50S ribosomal subunit.

Its function is as follows. Binds 23S rRNA and is also seen to make contacts with the A and possibly P site tRNAs. This is Large ribosomal subunit protein uL16 from Granulibacter bethesdensis (strain ATCC BAA-1260 / CGDNIH1).